The chain runs to 124 residues: Ubiquitin-related modifier 1 (124 aa).

Positions 34–53 (IPSLVPKDNTTSAKNPPPKD) are disordered. Gly124 is modified (1-thioglycine). Gly124 is covalently cross-linked (Glycyl lysine isopeptide (Gly-Lys) (interchain with K-? in acceptor proteins)).

It belongs to the URM1 family. In terms of processing, C-terminal thiocarboxylation occurs in 2 steps, it is first acyl-adenylated (-COAMP) via the hesA/moeB/thiF part of UBA4, then thiocarboxylated (-COSH) via the rhodanese domain of UBA4.

The protein resides in the cytoplasm. It functions in the pathway tRNA modification; 5-methoxycarbonylmethyl-2-thiouridine-tRNA biosynthesis. Acts as a sulfur carrier required for 2-thiolation of mcm(5)S(2)U at tRNA wobble positions of cytosolic tRNA(Lys), tRNA(Glu) and tRNA(Gln). Serves as sulfur donor in tRNA 2-thiolation reaction by being thiocarboxylated (-COSH) at its C-terminus by the MOCS3 homolog UBA4. The sulfur is then transferred to tRNA to form 2-thiolation of mcm(5)S(2)U. Prior mcm(5) tRNA modification by the elongator complex is required for 2-thiolation. Also acts as a ubiquitin-like protein (UBL) that is covalently conjugated via an isopeptide bond to lysine residues of target proteins such as AHP1. The thiocarboxylated form serves as substrate for conjugation and oxidative stress specifically induces the formation of UBL-protein conjugates. The polypeptide is Ubiquitin-related modifier 1 (Coprinopsis cinerea (strain Okayama-7 / 130 / ATCC MYA-4618 / FGSC 9003) (Inky cap fungus)).